A 466-amino-acid polypeptide reads, in one-letter code: ATP synthase subunit beta (466 aa).

152–159 (GGAGVGKT) contacts ATP.

Belongs to the ATPase alpha/beta chains family. F-type ATPases have 2 components, CF(1) - the catalytic core - and CF(0) - the membrane proton channel. CF(1) has five subunits: alpha(3), beta(3), gamma(1), delta(1), epsilon(1). CF(0) has three main subunits: a(1), b(2) and c(9-12). The alpha and beta chains form an alternating ring which encloses part of the gamma chain. CF(1) is attached to CF(0) by a central stalk formed by the gamma and epsilon chains, while a peripheral stalk is formed by the delta and b chains.

It is found in the cell inner membrane. It catalyses the reaction ATP + H2O + 4 H(+)(in) = ADP + phosphate + 5 H(+)(out). Its function is as follows. Produces ATP from ADP in the presence of a proton gradient across the membrane. The catalytic sites are hosted primarily by the beta subunits. The chain is ATP synthase subunit beta from Helicobacter acinonychis (strain Sheeba).